The following is a 1292-amino-acid chain: Sorbin and SH3 domain-containing protein 1 (1292 aa).

Disordered regions lie at residues M1 to D29, L73 to E158, H214 to L275, and R318 to V381. Over residues R74–S89 the composition is skewed to low complexity. T82 is modified (phosphothreonine). S86 and S89 each carry phosphoserine. The span at T93 to L102 shows a compositional bias: basic and acidic residues. E105, L114, V137, S146, S242, and S259 each carry phosphoserine. Positions L114–S128 are enriched in polar residues. Residues S240 to P252 show a composition bias toward pro residues. A compositionally biased stretch (polar residues) spans A266 to L275. S341 bears the Phosphoserine mark. T344 is subject to Phosphothreonine. Phosphoserine is present on residues E346 and S350. Residues A354–R365 show a composition bias toward basic and acidic residues. One can recognise a SoHo domain in the interval V366–D469. A phosphoserine mark is found at S369, S374, and N387. Positions L405–S534 are disordered. The span at Y437–P450 shows a compositional bias: polar residues. Phosphoserine is present on residues S452, S465, D469, S472, R478, and S481. Residues S510–S534 show a composition bias toward basic and acidic residues. The residue at position 536 (Y536) is a Phosphotyrosine; by ABL1. S556, N603, S609, and S640 each carry phosphoserine. The tract at residues A628–P650 is disordered. Y654 is subject to Phosphotyrosine; by ABL1. Phosphoserine occurs at positions 665 and 700. Residues P692–H716 form a disordered region. At T708 the chain carries Phosphothreonine. Phosphoserine is present on residues S713, I730, D735, and I765. Residues S793–P852 enclose the SH3 1 domain. T862 carries the post-translational modification Phosphothreonine. The SH3 2 domain maps to L867–R928. V923 bears the Phosphoserine mark. Y937 carries the phosphotyrosine modification. The segment covering S944 to P954 has biased composition (low complexity). 4 disordered regions span residues S944–A976, S1041–L1064, Q1106–C1150, and T1162–S1230. Phosphoserine is present on residues S945 and S953. Polar residues predominate over residues Q955–P971. A compositionally biased stretch (polar residues) spans Q1106 to R1117. Positions P1119–G1136 are enriched in basic and acidic residues. Residues T1162 to P1172 are compositionally biased toward polar residues. Basic and acidic residues predominate over residues Q1192–G1203. Residues G1211–S1230 are compositionally biased toward polar residues. Residue Q1213 is modified to Phosphoserine. The SH3 3 domain occupies Q1231–L1292. A Phosphotyrosine; by ABL1 modification is found at Y1240.

As to quaternary structure, interacts (via third SH3 domain) with the Ten-1 ICD form of TENM1; the interaction induces the translocation of SORBS1 to the nucleus. Interacts with INSM1. Interacts with the long isoform of AFDN and with VCL. AFDN and VCL bind to SORBS1 in a competitive manner and do not form a ternary complex. Interacts with ABL1, CBL, CBLB and INPPL1/SHIP2 through the third SH3 domain. Interaction with ABL1 occurs only after insulin stimulation while this has no effect on the interaction with INPPL1. Interacts with the insulin receptor but dissociates from it following insulin stimulation. Also interacts with SCA7, PTK2/FAK1 and flotillin. Interacts (via SH3 domain 2) with PXN. O-glycosylated. Detected in skeletal muscle (at protein level). Widely expressed with highest levels in heart and skeletal muscle.

It localises to the cell junction. It is found in the adherens junction. The protein resides in the cell membrane. Its subcellular location is the cytoplasm. The protein localises to the cytoskeleton. It localises to the focal adhesion. It is found in the nucleus. The protein resides in the nucleus matrix. In terms of biological role, plays a role in tyrosine phosphorylation of CBL by linking CBL to the insulin receptor. Required for insulin-stimulated glucose transport. Involved in formation of actin stress fibers and focal adhesions. This is Sorbin and SH3 domain-containing protein 1 from Homo sapiens (Human).